A 597-amino-acid chain; its full sequence is MKIEDKLVTSVISGLKALYGQDVPAAQVQLQKTKKEFEGHLTLVVFPFLKMSKKGPEQTAQEIGEYLKANEPAVAAFNVIKGFLNLTVASATWIELLNEIHADAQYGIVSADENAPLVMIEYSSPNTNKPLHLGHVRNNLLGNALANIVMANGNKVVKTNIVNDRGIHICKSMLAWQKYGKGETPESSGKKGDHLVGDYYVAFDKHYKAEVAELMEKGMSKEEAEAASPLMNEAREMLVKWEAGDPEVRALWQMMNNWVYTGFDETYRKMGVGFDKIYYESNTYLEGKEKVMEGLEKGFFFKKEDGSVWADLTAEGLDHKLLLRGDGTSVYMTQDIGTAKLRFADYPIDKMIYVVGNEQNYHFQVLSILLDKLGFEWGKSLVHFSYGMVELPEGKMKSREGTVVDADDLMAEMIATAKETSQELGKLDGLTQEEADDIARIVGLGALKYFILKVDARKNMTFNPKESIDFNGNTGPFIQYTYARIRSVLRKAAEAGIVIPEVLPANIELSEKEEGLIQMVADFAAVVRQAGEDYSPSGIANYVYDLVKEYNQFYHDFSILREENEDVKLFRIALSANIAKVVRLGMGLLGIEVPDRM.

A 'HIGH' region motif is present at residues 125 to 135; that stretch reads PNTNKPLHLGH.

This sequence belongs to the class-I aminoacyl-tRNA synthetase family. As to quaternary structure, monomer.

It is found in the cytoplasm. The catalysed reaction is tRNA(Arg) + L-arginine + ATP = L-arginyl-tRNA(Arg) + AMP + diphosphate. In Bacteroides fragilis (strain YCH46), this protein is Arginine--tRNA ligase.